A 1085-amino-acid polypeptide reads, in one-letter code: Solute carrier family 12 member 4 (1085 aa).

At 1–119 (MPHFTVVPVD…RRAAKAPSMG (119 aa)) the chain is on the cytoplasmic side. A phosphoserine mark is found at serine 24, serine 47, serine 51, serine 81, and serine 88. The tract at residues 32-56 (AEREDSDGQGNHRENSPFLSPLDAS) is disordered. Residues 120–141 (TLMGVYLPCLQNIFGVILFLRL) traverse the membrane as a discontinuously helical segment. Asparagine 131 and isoleucine 132 together coordinate K(+). Residues 142–149 (TWMVGTAG) are Extracellular-facing. A helical membrane pass occupies residues 150–172 (VLQALLIVLICCCCTLLTAISMS). Residues 173–196 (AIATNGVVPAGGSYFMISRSLGPE) lie on the Cytoplasmic side of the membrane. The chain crosses the membrane as a helical span at residues 197–225 (FGGAVGLCFYLGTTFAAAMYILGAIEILL). Tyrosine 216 serves as a coordination point for K(+). Over 226–248 (TYIAPPAAIFYPSGTHDMSSATL) the chain is Extracellular. 2 helical membrane passes run 249–271 (NNMRVYGTIFLTFMTLVVFVGVK) and 272–297 (YVNKFASLFLACVIISILSIYVGGIK). The Extracellular segment spans residues 298-419 (SAFDPPVFPV…LYVVADIATS (122 aa)). Cysteine 308 and cysteine 323 are joined by a disulfide. Residues asparagine 312, asparagine 331, and asparagine 347 are each glycosylated (N-linked (GlcNAc...) asparagine). A disulfide bridge links cysteine 343 with cysteine 353. Residues 420-440 (FTVLVGIFFPSVTGIMAGSNR) form a helical membrane-spanning segment. K(+) is bound by residues proline 429 and threonine 432. Chloride contacts are provided by glycine 433, isoleucine 434, and methionine 435. Residues 441–450 (SGDLRDAQKS) lie on the Cytoplasmic side of the membrane. A helical membrane pass occupies residues 451–473 (IPVGTILAIVTTSLVYFSSVILF). Over 474–504 (GACIEGVVLRDKYGDGVSRNLVVGTLAWPSP) the chain is Extracellular. Residues 505-531 (WVIVVGSFFSTCGAGLQSLTGAPRLLQ) traverse the membrane as a helical segment. Over 532–554 (AIAKDNIIPFLRVFGHGKANGEP) the chain is Cytoplasmic. The next 2 membrane-spanning stretches (helical) occupy residues 555 to 575 (TWALLLTALIAELGILIASLD) and 576 to 598 (MVAPILSMFFLMCYLFVNLACAV). Tyrosine 589 serves as a coordination point for chloride. The Cytoplasmic portion of the chain corresponds to 599–612 (QTLLRTPNWRPRFK). A run of 2 helical transmembrane segments spans residues 613 to 635 (YYHWALSFLGMSLCLALMFVSSW) and 636 to 651 (YYALVAMVIAGMIYKY). Residues 652-1085 (IEYQGAEKEW…GGREVITIYS (434 aa)) are Cytoplasmic-facing. A scissor helix region spans residues 665–681 (IRGLSLSAARYALLRLE). Residues leucine 697, lysine 699, lysine 707, tyrosine 708, and valine 730 each contribute to the ATP site. Phosphoserine is present on serine 734. The ATP site is built by glycine 794, tryptophan 795, and tyrosine 797. Serine 916 and serine 967 each carry phosphoserine. Phosphothreonine is present on threonine 983. A Phosphoserine modification is found at serine 1050.

Belongs to the SLC12A transporter family. K/Cl co-transporter subfamily. As to quaternary structure, homodimer; adopts a domain-swap conformation at the scissor helices connecting the transmembrane domain and C-terminal domain. Heterodimer with other K-Cl cotransporters. In terms of processing, N-glycosylated. Phosphorylated, phosphorylation may regulate transporter activity. As to expression, ubiquitous.

It localises to the cell membrane. The catalysed reaction is K(+)(in) + chloride(in) = K(+)(out) + chloride(out). Inhibited by WNK3. In terms of biological role, mediates electroneutral potassium-chloride cotransport when activated by cell swelling. May contribute to cell volume homeostasis in single cells. May be involved in the regulation of basolateral Cl(-) exit in NaCl absorbing epithelia. This is Solute carrier family 12 member 4 (Slc12a4) from Rattus norvegicus (Rat).